The following is a 567-amino-acid chain: Galectin-3-binding protein A (567 aa).

The signal sequence occupies residues 1–16; it reads MIMYIIWALLFIPVSA. Residues 34 to 133 form the SRCR domain; the sequence is VRLVGGLPSS…HQEDAGVVCD (100 aa). 3 disulfide bridges follow: Cys58-Cys122, Cys71-Cys132, and Cys102-Cys112. Asn137, Asn197, Asn200, and Asn204 each carry an N-linked (GlcNAc...) asparagine glycan. Residues 272–374 form the BACK domain; the sequence is PVSMYEYGLR…IPVDKLYDIQ (103 aa). N-linked (GlcNAc...) asparagine glycans are attached at residues Asn412, Asn432, and Asn543.

The protein localises to the secreted. Its subcellular location is the extracellular space. It is found in the extracellular matrix. Promotes integrin-mediated cell adhesion. The polypeptide is Galectin-3-binding protein A (lgals3bpa) (Danio rerio (Zebrafish)).